The chain runs to 430 residues: Potassium channel subfamily K member 12 (430 aa).

Over methionine 1–arginine 38 the chain is Cytoplasmic. The segment at arginine 11–arginine 16 is ER retention/retrieval signal. A helical transmembrane segment spans residues phenylalanine 39–alanine 59. N-linked (GlcNAc...) asparagine glycosylation is present at asparagine 78. The segment at residues tryptophan 114 to methionine 134 is an intramembrane region (pore-forming). Threonine 129, isoleucine 130, and glycine 131 together coordinate K(+). Residues threonine 129–methionine 134 are selectivity filter 1. Residues phenylalanine 145–leucine 165 traverse the membrane as a helical segment. At glutamate 166 to serine 212 the chain is on the cytoplasmic side. Residues valine 213–alanine 233 form a helical membrane-spanning segment. An intramembrane region (pore-forming) is located at residues tyrosine 243–valine 263. Threonine 256, isoleucine 257, glycine 258, and phenylalanine 259 together coordinate K(+). Positions threonine 256 to aspartate 261 are selectivity filter 2. A helical membrane pass occupies residues leucine 282 to isoleucine 302. Residues lysine 303 to arginine 430 are Cytoplasmic-facing.

This sequence belongs to the two pore domain potassium channel (TC 1.A.1.8) family. As to quaternary structure, homodimer. Heterodimer with KCNK13. In terms of tissue distribution, highly expressed in most brain regions. Also expressed in other tissues such as lung, kidney, liver, stomach and spleen.

It localises to the cell membrane. The protein resides in the endoplasmic reticulum membrane. The enzyme catalyses K(+)(in) = K(+)(out). K(+) channel subunit that may homo- and heterodimerize to form functional channels with distinct regulatory and gating properties. Can heterodimerize with KCNK13 subunit to conduct K(+) outward rectifying currents at the plasma membrane. The homodimers are mainly retained in the endoplasmic reticulum compartment and may be targeted to the cell surface upon phosphorylation or other activation signals yet to be elucidated. This is Potassium channel subfamily K member 12 (Kcnk12) from Rattus norvegicus (Rat).